The chain runs to 357 residues: Peptide chain release factor 1 (357 aa).

The residue at position 235 (Q235) is an N5-methylglutamine.

Belongs to the prokaryotic/mitochondrial release factor family. Methylated by PrmC. Methylation increases the termination efficiency of RF1.

The protein resides in the cytoplasm. Functionally, peptide chain release factor 1 directs the termination of translation in response to the peptide chain termination codons UAG and UAA. In Alkaliphilus metalliredigens (strain QYMF), this protein is Peptide chain release factor 1.